A 1781-amino-acid chain; its full sequence is Signal-induced proliferation-associated 1-like protein 3 (1781 aa).

2 disordered regions span residues 45 to 166 (SMSQ…FLPL) and 239 to 332 (TELL…EASR). Low complexity predominate over residues 54–73 (PATATATATATTRPSPTTPA). The span at 87-97 (PPKREALREHS) shows a compositional bias: basic and acidic residues. The residue at position 100 (Ser-100) is a Phosphoserine. Positions 118–135 (RSIQNGQPPTSTPASSGS) are enriched in polar residues. Residues 137 to 146 (AFHRLSRRRS) are compositionally biased toward basic residues. Ser-146 is modified (phosphoserine). Ser-401 carries the post-translational modification Phosphoserine. Residues 611-828 (LLKLDEQGLC…RTRQEYLKDL (218 aa)) form the Rap-GAP domain. In terms of domain architecture, PDZ spans 966–1042 (DMTLRRNGLG…VKVVIIPPFE (77 aa)). 4 disordered regions span residues 1046-1112 (PRRG…SLSR), 1124-1221 (ESQP…QKPE), 1236-1565 (AGSS…GLEP), and 1583-1636 (TLPA…RLDP). 2 stretches are compositionally biased toward polar residues: residues 1080-1111 (APWQWSGPASHNSLPASKWATPTTPGHAQSLS) and 1157-1166 (PSGSFSTPGS). Positions 1196–1210 (DGTSSGDSSSGGLTS) are enriched in low complexity. Over residues 1245 to 1261 (SRQDAAGKDSPNRHSKG) the composition is skewed to basic and acidic residues. Residues 1266-1281 (SSHSSSNTLSSNASSS) show a composition bias toward low complexity. A compositionally biased stretch (polar residues) spans 1304–1322 (GGSSDSGIDTTLYTSSPSC). Ser-1364 carries the phosphoserine modification. Thr-1387 is subject to Phosphothreonine. Positions 1425-1441 (RPSQLAQPSPFQLSASV) are enriched in polar residues. Lys-1448 carries the N6-acetyllysine modification. Residues 1509–1518 (TIEDDLKKLI) are compositionally biased toward basic and acidic residues. The span at 1532–1547 (GQSPQKGLQRTLSDES) shows a compositional bias: polar residues. Ser-1544 and Ser-1547 each carry phosphoserine. The segment covering 1599–1609 (PGATPAAGSGF) has biased composition (low complexity). 2 positions are modified to phosphoserine: Ser-1619 and Ser-1622. The span at 1625–1635 (DGRDRPLRRLD) shows a compositional bias: basic and acidic residues. Residue Ser-1677 is modified to Phosphoserine. Positions 1685–1712 (SPVHSHLSLERGPPTPRTTPTMSEEPPL) are disordered. 2 positions are modified to phosphothreonine: Thr-1699 and Thr-1703. Residues 1720 to 1774 (QLEVMLKQLHTDLQKEKQDKVVLQSEVASLRQNNQRLQEESQAASEQLRKFAEIF) are a coiled coil.

Its subcellular location is the apical cell membrane. Functionally, plays a critical role in epithelial cell morphogenesis, polarity, adhesion and cytoskeletal organization in the lens. This Homo sapiens (Human) protein is Signal-induced proliferation-associated 1-like protein 3 (SIPA1L3).